The following is a 743-amino-acid chain: Catalase-peroxidase (743 aa).

The tract at residues 1–29 (MNAESGENAGGGCPLGHGAGAPRKRPSNR) is disordered. Over residues 8-19 (NAGGGCPLGHGA) the composition is skewed to gly residues. Residues 100–222 (WHSAGTYRIT…LGAVQMGLIY (123 aa)) constitute a cross-link (tryptophyl-tyrosyl-methioninium (Trp-Tyr) (with M-248)). His-101 serves as the catalytic Proton acceptor. Residues 222–248 (YVNPEGPNGNPDPKAAAVDIRETFARM) constitute a cross-link (tryptophyl-tyrosyl-methioninium (Tyr-Met) (with W-100)). His-263 contacts heme b.

It belongs to the peroxidase family. Peroxidase/catalase subfamily. As to quaternary structure, homodimer or homotetramer. Requires heme b as cofactor. Formation of the three residue Trp-Tyr-Met cross-link is important for the catalase, but not the peroxidase activity of the enzyme.

The catalysed reaction is H2O2 + AH2 = A + 2 H2O. The enzyme catalyses 2 H2O2 = O2 + 2 H2O. Functionally, bifunctional enzyme with both catalase and broad-spectrum peroxidase activity. The polypeptide is Catalase-peroxidase (Stutzerimonas stutzeri (strain A1501) (Pseudomonas stutzeri)).